The following is a 313-amino-acid chain: MANRKIVVALGGNAILSKDASAEAQQAALRETAKSLVSLVKENEKLIITHGNGPQVGNLLLQQMIGSTKSNPAMPIDTAVSMTEGSIGYWMQNAMDDVLEDEGIDKSAATVVTQVEVDANDSAFQNPSKPIGPFYEKEDINKIRELHPEYIYVEDAGRGYRRVVPSPKPVNVREYQVINSLVDNNVIPISVGGGGVPVVREGNHLIGCEAVIDKDFASEKLAELIKADLLIILTAVDNVYINFNKPDQKKLENVTVEELENYINENQFAKGSMLPKVQAAINFVNNGCGEAVVTSLKNINNFLQKGSGTIITK.

Belongs to the carbamate kinase family.

It localises to the cytoplasm. The catalysed reaction is hydrogencarbonate + NH4(+) + ATP = carbamoyl phosphate + ADP + H2O + H(+). It functions in the pathway metabolic intermediate metabolism; carbamoyl phosphate degradation; CO(2) and NH(3) from carbamoyl phosphate: step 1/1. This chain is Carbamate kinase (arcC), found in Oenococcus oeni (Leuconostoc oenos).